Reading from the N-terminus, the 241-residue chain is MNPQLSPKAIREIREGTCNPLGAPQVTTDLSENIILTSLDDLHNWARLSSLWPLLYGTACCFIEFAALIGSRFDFDRFGLVPRSSPRQADLLIVAGTVTMKMAPALVRLYEQMPEPKYVIAMGACTITGGMFSADSTTAVRGVDKLIPVDLYLPGCPPRPEAIFDAVIKLRKKVGNESILERKKTEQTHRYITSDHEMNLVFSENTGEYLNKTSAKVISSSQKEKITELPEKTEITNTEKD.

[4Fe-4S] cluster is bound by residues Cys60, Cys61, Cys125, and Cys156. The tract at residues 220–241 (SSQKEKITELPEKTEITNTEKD) is disordered. Over residues 222-241 (QKEKITELPEKTEITNTEKD) the composition is skewed to basic and acidic residues.

The protein belongs to the complex I 20 kDa subunit family. As to quaternary structure, NDH-1 can be composed of about 15 different subunits; different subcomplexes with different compositions have been identified which probably have different functions. The cofactor is [4Fe-4S] cluster.

The protein localises to the cellular thylakoid membrane. The catalysed reaction is a plastoquinone + NADH + (n+1) H(+)(in) = a plastoquinol + NAD(+) + n H(+)(out). The enzyme catalyses a plastoquinone + NADPH + (n+1) H(+)(in) = a plastoquinol + NADP(+) + n H(+)(out). Its function is as follows. NDH-1 shuttles electrons from an unknown electron donor, via FMN and iron-sulfur (Fe-S) centers, to quinones in the respiratory and/or the photosynthetic chain. The immediate electron acceptor for the enzyme in this species is believed to be plastoquinone. Couples the redox reaction to proton translocation, and thus conserves the redox energy in a proton gradient. Cyanobacterial NDH-1 also plays a role in inorganic carbon-concentration. This chain is NAD(P)H-quinone oxidoreductase subunit K, found in Prochlorococcus marinus (strain MIT 9215).